The chain runs to 437 residues: 5-hydroxytryptamine receptor 3B (437 aa).

An N-terminal signal peptide occupies residues 1 to 21 (MILLWSCLLVAVVGILGTATP). Residues 22–238 (QPGNSSLHRL…VVIRRCPLAY (217 aa)) lie on the Extracellular side of the membrane. N-linked (GlcNAc...) asparagine glycosylation is found at Asn-25, Asn-92, and Asn-134. Cys-151 and Cys-165 form a disulfide bridge. Residues 239-259 (VVSLLIPSIFLMLVDLGSFYL) traverse the membrane as a helical segment. The Cytoplasmic segment spans residues 260–264 (PPNCR). The chain crosses the membrane as a helical span at residues 265 to 282 (ARIVFKTNVLVGYTVFRV). A glycan (N-linked (GlcNAc...) asparagine) is linked at Asn-283. Topologically, residues 283–292 (NMSDEVPRSA) are extracellular. A helical transmembrane segment spans residues 293–313 (GCTPLIGVFFTVCMALLVLSL). Topologically, residues 314-410 (SKSILLIKFL…WLAILYRFDQ (97 aa)) are cytoplasmic. The tract at residues 377–409 (FWFQFRSINNSLRTRDQIHQKEVEWLAILYRFD) is HA-stretch; determines single-channel conductance in 5-HT3 receptors. Residues 411-431 (LLFRIYLAVLGLYTVTLCSLW) form a helical membrane-spanning segment. Over 432–437 (ALWSRM) the chain is Extracellular.

This sequence belongs to the ligand-gated ion channel (TC 1.A.9) family. 5-hydroxytryptamine receptor (TC 1.A.9.2) subfamily. HTR3B sub-subfamily. As to quaternary structure, forms homopentameric as well as heteropentameric serotonin-activated cation-selective channel complexes with HTR3A. The homomeric complex is not functional. Heteropentameric complexes display properties which resemble that of neuronal serotonin-activated channels in vivo. N-glycosylation is required for membrane localization.

The protein resides in the postsynaptic cell membrane. Its subcellular location is the cell membrane. It catalyses the reaction Na(+)(in) = Na(+)(out). It carries out the reaction K(+)(in) = K(+)(out). The catalysed reaction is Ca(2+)(in) = Ca(2+)(out). Its function is as follows. Forms serotonin (5-hydroxytryptamine/5-HT3)-activated cation-selective channel complexes, which when activated cause fast, depolarizing responses in neurons. The sequence is that of 5-hydroxytryptamine receptor 3B from Mus musculus (Mouse).